Consider the following 108-residue polypeptide: SPbeta prophage-derived uncharacterized HTH-type transcriptional regulator YonR (108 aa).

The 55-residue stretch at 6–60 (LKKCRTSKGYSQQRMADFLGITRQGYGKYEIGKAEPDLKTLTKLSNILGVSTDFL) folds into the HTH cro/C1-type domain. The segment at residues 17-36 (QQRMADFLGITRQGYGKYEI) is a DNA-binding region (H-T-H motif).

This is SPbeta prophage-derived uncharacterized HTH-type transcriptional regulator YonR (yonR) from Bacillus subtilis (strain 168).